The following is a 434-amino-acid chain: Ribonuclease T2-like (434 aa).

Positions 1–18 (MLLKNLHSLLQLPIFSNG) are cleaved as a signal peptide. Disulfide bonds link cysteine 27/cysteine 46, cysteine 35/cysteine 94, cysteine 45/cysteine 171, cysteine 102/cysteine 163, and cysteine 241/cysteine 277. 2 N-linked (GlcNAc...) asparagine glycosylation sites follow: asparagine 37 and asparagine 70. The active site involves histidine 87. 2 N-linked (GlcNAc...) asparagine glycosylation sites follow: asparagine 103 and asparagine 123. Catalysis depends on residues glutamate 156 and histidine 160.

Belongs to the RNase T2 family. N-glycosylated.

It is found in the vacuole lumen. It localises to the cytoplasm. The enzyme catalyses a ribonucleotidyl-ribonucleotide-RNA + H2O = a 3'-end 3'-phospho-ribonucleotide-RNA + a 5'-end dephospho-ribonucleoside-RNA + H(+). Rnase which modulates cell survival under stress conditions. Released from the vacuole to the cytoplasm during stress to promote tRNA and rRNA cleavage and to activate separately a downstream pathway that promotes cell death. Involved in cell size, vacuolar morphology and growth at high temperatures and high salt concentration. The chain is Ribonuclease T2-like (RNY1) from Saccharomyces cerevisiae (strain ATCC 204508 / S288c) (Baker's yeast).